Here is a 521-residue protein sequence, read N- to C-terminus: Glucose-1-phosphate adenylyltransferase large subunit 2, chloroplastic/amyloplastic (521 aa).

The transit peptide at 1–47 (MQFSSVLPLEGKACMSPVRRGSGGYGSERMRINCCSIRRNKALRRMC) directs the protein to the chloroplast.

Belongs to the bacterial/plant glucose-1-phosphate adenylyltransferase family. Heterotetramer. As to expression, abundant in the embryo and is also present in the endosperm.

It is found in the plastid. Its subcellular location is the chloroplast. The protein localises to the amyloplast. The enzyme catalyses alpha-D-glucose 1-phosphate + ATP + H(+) = ADP-alpha-D-glucose + diphosphate. Its pathway is glycan biosynthesis; starch biosynthesis. With respect to regulation, activated by 3'phosphoglycerate, inhibited by orthophosphate. Allosteric regulation. Its function is as follows. This protein plays a role in synthesis of starch. It catalyzes the synthesis of the activated glycosyl donor, ADP-glucose from Glc-1-P and ATP. The protein is Glucose-1-phosphate adenylyltransferase large subunit 2, chloroplastic/amyloplastic (AGP2) of Zea mays (Maize).